A 324-amino-acid chain; its full sequence is tRNA dimethylallyltransferase (324 aa).

Residue 18-25 (GPTAVGKT) coordinates ATP. Residue 20–25 (TAVGKT) participates in substrate binding. Residues 43–46 (DSRQ) form an interaction with substrate tRNA region.

The protein belongs to the IPP transferase family. In terms of assembly, monomer. The cofactor is Mg(2+).

The catalysed reaction is adenosine(37) in tRNA + dimethylallyl diphosphate = N(6)-dimethylallyladenosine(37) in tRNA + diphosphate. In terms of biological role, catalyzes the transfer of a dimethylallyl group onto the adenine at position 37 in tRNAs that read codons beginning with uridine, leading to the formation of N6-(dimethylallyl)adenosine (i(6)A). The protein is tRNA dimethylallyltransferase of Salinibacter ruber (strain DSM 13855 / M31).